Consider the following 503-residue polypeptide: ATP synthase subunit alpha (503 aa).

170–177 (GDKQTGKT) contributes to the ATP binding site.

It belongs to the ATPase alpha/beta chains family. In terms of assembly, F-type ATPases have 2 components, CF(1) - the catalytic core - and CF(0) - the membrane proton channel. CF(1) has five subunits: alpha(3), beta(3), gamma(1), delta(1), epsilon(1). CF(0) has three main subunits: a(1), b(2) and c(9-12). The alpha and beta chains form an alternating ring which encloses part of the gamma chain. CF(1) is attached to CF(0) by a central stalk formed by the gamma and epsilon chains, while a peripheral stalk is formed by the delta and b chains.

Its subcellular location is the cell inner membrane. The catalysed reaction is ATP + H2O + 4 H(+)(in) = ADP + phosphate + 5 H(+)(out). In terms of biological role, produces ATP from ADP in the presence of a proton gradient across the membrane. The alpha chain is a regulatory subunit. The chain is ATP synthase subunit alpha from Helicobacter pylori (strain Shi470).